A 270-amino-acid polypeptide reads, in one-letter code: MAVITKIEVQKRSKERFNIYIDKGQGEEYGFSVDQVILIKHGLQKGLEIDEIELGNILYNEEVQKAYLQAISYLSYQMRTKQEIEDFLRKKEVGQAIISEVVSKLLHDRYINDKEYAVLYTRTQSNVNRKGPTVIKRELLNKGVQDLIITHSLQEYPKEKQIENALFLIEKKKKSYQKHSFLQMKLKLDEMLVRKGYSREVIQICLEELKDEKDDEKQQEALHYHGNKYYEKYKKHDGWTFENKMKQALYRKGFSIDEIEIFLQMKREEE.

The protein belongs to the RecX family.

The protein resides in the cytoplasm. Its function is as follows. Modulates RecA activity. The polypeptide is Regulatory protein RecX (Bacillus cereus (strain B4264)).